The chain runs to 304 residues: Sulfate adenylyltransferase subunit 2 (304 aa).

Belongs to the PAPS reductase family. CysD subfamily. Heterodimer composed of CysD, the smaller subunit, and CysNC.

It catalyses the reaction sulfate + ATP + H(+) = adenosine 5'-phosphosulfate + diphosphate. The protein operates within sulfur metabolism; hydrogen sulfide biosynthesis; sulfite from sulfate: step 1/3. With CysN forms the ATP sulfurylase (ATPS) that catalyzes the adenylation of sulfate producing adenosine 5'-phosphosulfate (APS) and diphosphate, the first enzymatic step in sulfur assimilation pathway. APS synthesis involves the formation of a high-energy phosphoric-sulfuric acid anhydride bond driven by GTP hydrolysis by CysN coupled to ATP hydrolysis by CysD. This Xylella fastidiosa (strain 9a5c) protein is Sulfate adenylyltransferase subunit 2.